Reading from the N-terminus, the 282-residue chain is NAC domain-containing protein 1 (282 aa).

The NAC domain occupies 9-161 (LPPGFRFHPT…DWVLCRIYKK (153 aa)). Residues 106–167 (VGIKKALVFY…IYKKKNLGRT (62 aa)) mediate DNA binding. The stretch at 161–188 (KKNLGRTIEMMKVEEEELEAQNVSTTNN) forms a coiled coil.

In terms of tissue distribution, expressed in roots, stem, flowers, and leaves.

It is found in the nucleus. Its function is as follows. Transcription factor that binds DNA motifs 5'-CGT[AG](5N)NACG[ACT][AC][AT][ACG][ACT]-3' and 5'-CACG[ACT][AC][AT][AGT][CT]-3' in target genes promoters. Promotes leaf senescence and reduces fruit yield and sugar content, probably by establishing abscisic acid (ABA) homeostasis. This Solanum lycopersicum (Tomato) protein is NAC domain-containing protein 1.